The chain runs to 156 residues: Cyanate hydratase (156 aa).

Residues Arg-96, Glu-99, and Ser-122 contribute to the active site.

It belongs to the cyanase family.

It catalyses the reaction cyanate + hydrogencarbonate + 3 H(+) = NH4(+) + 2 CO2. Its function is as follows. Catalyzes the reaction of cyanate with bicarbonate to produce ammonia and carbon dioxide. In Mycobacteroides abscessus (strain ATCC 19977 / DSM 44196 / CCUG 20993 / CIP 104536 / JCM 13569 / NCTC 13031 / TMC 1543 / L948) (Mycobacterium abscessus), this protein is Cyanate hydratase.